Consider the following 431-residue polypeptide: Beclin-2 (431 aa).

The disordered stretch occupies residues 17–74 (LSGSSESRSLPAAPAPTSGQAEPGDTREPGVTTREVTDAEEQQDGASSRSPPGDGSVS). Residues 125–248 (LLEQLDIQLA…ARVQRDRLKE (124 aa)) are a coiled coil. The tract at residues 173 to 243 (EARLVQELED…NQLQYARVQR (71 aa)) is required for homodimer formation.

It belongs to the beclin family. In terms of assembly, homodimer (via coiled-coil domain). Interacts (via coiled-coil domain) with ATG14 (via coiled-coil domain); this interaction is tighter than BECN2 self-association. Interacts with AMBRA1, UVRAG and PIK3C3/VPS34; these interactions are not disrupted by starvation. Does not interact with RUBCN. Interacts (via N-terminus) with GPRASP1/GASP1; the interaction is direct. In terms of tissue distribution, present in fetal and adult brain (at protein level).

It is found in the cytoplasm. In terms of biological role, involved in 2 distinct lysosomal degradation pathways: acts as a regulator of autophagy and as a regulator of G-protein coupled receptors turnover. Regulates degradation in lysosomes of a variety of G-protein coupled receptors via its interaction with GPRASP1/GASP1. The chain is Beclin-2 from Homo sapiens (Human).